A 233-amino-acid chain; its full sequence is MPYEPPTHTVERSLRATTGAKIIAGVDEVGRGAWAGPVTVCAAITGLRRPPVGLTDSKLLTIKRRTELEVELRTWVTSYALGHASPEEIDAMGMTAALRLAAVRALGTLPVRPDAVILDGKHDYLGAPWRVRTVIKGDQSCIAVAAASVLAKVQRDKMMAELGVDHADFGFADNAGYPSPVHKAALEERGPTPHHRLSWAYLDALPQWRHLKKVRSWVEGSVPEIEGQLGFDF.

Residues 21–211 (KIIAGVDEVG…LDALPQWRHL (191 aa)) form the RNase H type-2 domain. A divalent metal cation contacts are provided by D27, E28, and D119.

The protein belongs to the RNase HII family. Requires Mn(2+) as cofactor. Mg(2+) serves as cofactor.

The protein resides in the cytoplasm. The catalysed reaction is Endonucleolytic cleavage to 5'-phosphomonoester.. In terms of biological role, endonuclease that specifically degrades the RNA of RNA-DNA hybrids. The protein is Ribonuclease HII (rnhB) of Streptomyces coelicolor (strain ATCC BAA-471 / A3(2) / M145).